The chain runs to 901 residues: HTH-type transcriptional regulator MalT (901 aa).

39 to 46 lines the ATP pocket; that stretch reads SPAGYGKT. Residues 829–894 form the HTH luxR-type domain; it reads ELIRTSPLTQ…AAVQHAQKLL (66 aa). Residues 853–872 constitute a DNA-binding region (H-T-H motif); the sequence is NEQIAGELEVAATTIKTHIR.

It belongs to the MalT family. In terms of assembly, monomer in solution. Oligomerizes to an active state in the presence of the positive effectors ATP and maltotriose.

Its activity is regulated as follows. Activated by ATP and maltotriose, which are both required for DNA binding. Its function is as follows. Positively regulates the transcription of the maltose regulon whose gene products are responsible for uptake and catabolism of malto-oligosaccharides. Specifically binds to the promoter region of its target genes, recognizing a short DNA motif called the MalT box. The sequence is that of HTH-type transcriptional regulator MalT from Escherichia coli O127:H6 (strain E2348/69 / EPEC).